We begin with the raw amino-acid sequence, 294 residues long: 4-hydroxy-tetrahydrodipicolinate synthase (294 aa).

Position 45 (Thr-45) interacts with pyruvate. Residue Tyr-133 is the Proton donor/acceptor of the active site. Residue Lys-161 is the Schiff-base intermediate with substrate of the active site. Ile-203 contributes to the pyruvate binding site.

The protein belongs to the DapA family. As to quaternary structure, homotetramer; dimer of dimers.

It is found in the cytoplasm. It carries out the reaction L-aspartate 4-semialdehyde + pyruvate = (2S,4S)-4-hydroxy-2,3,4,5-tetrahydrodipicolinate + H2O + H(+). It participates in amino-acid biosynthesis; L-lysine biosynthesis via DAP pathway; (S)-tetrahydrodipicolinate from L-aspartate: step 3/4. Catalyzes the condensation of (S)-aspartate-beta-semialdehyde [(S)-ASA] and pyruvate to 4-hydroxy-tetrahydrodipicolinate (HTPA). In Shewanella sp. (strain W3-18-1), this protein is 4-hydroxy-tetrahydrodipicolinate synthase.